The primary structure comprises 407 residues: Substance-P receptor (407 aa).

Residues 1 to 31 lie on the Extracellular side of the membrane; sequence MDNVLPGDSDLFPNISTNSSESNQFVQPAWQ. N-linked (GlcNAc...) asparagine glycosylation is found at asparagine 14 and asparagine 18. A helical membrane pass occupies residues 32-54; sequence IVLWAAAYTVIVVTSVVGNVVVM. The Cytoplasmic segment spans residues 55-64; the sequence is WIILAHKRMR. The chain crosses the membrane as a helical span at residues 65–86; it reads TVTNYFLVNLAFAEASMAAFNT. The Extracellular portion of the chain corresponds to 87-106; the sequence is VVNFTYAVHNEWYYGLFYCK. An N-linked (GlcNAc...) asparagine glycan is attached at asparagine 89. Residues cysteine 105 and cysteine 180 are joined by a disulfide bond. Residues 107–128 traverse the membrane as a helical segment; that stretch reads FHNFFPIAAVFASIYSMTAVAF. The Cytoplasmic portion of the chain corresponds to 129 to 148; the sequence is DRYMAIIHPLQPRLSATATK. A helical transmembrane segment spans residues 149–169; that stretch reads VVIFVIWVLALLLAFPQGYYS. Over 170–194 the chain is Extracellular; it reads TTETMPGRVVCMIEWPEHPNRTYEK. N-linked (GlcNAc...) asparagine glycosylation is present at asparagine 189. Residues 195 to 219 traverse the membrane as a helical segment; it reads AYHICVTVLIYFLPLLVIGYAYTVV. Topologically, residues 220-248 are cytoplasmic; sequence GITLWASEIPGDSSDRYHEQVSAKRKVVK. The chain crosses the membrane as a helical span at residues 249–270; it reads MMIVVVCTFAICWLPFHVFFLL. At 271–283 the chain is on the extracellular side; sequence PYINPDLYVKKFI. A helical membrane pass occupies residues 284 to 308; the sequence is QQVYLAIMWLAMSSTMYNPIIYCCL. At 309–407 the chain is on the cytoplasmic side; sequence NDRFRLGFKH…SSSFYSNMLA (99 aa). Cysteine 322 carries S-palmitoyl cysteine lipidation. The tract at residues 365–407 is disordered; sequence HEDEAEEGPKATPSSLDLTSNGSSRSNSKTMTESSSFYSNMLA. Residues 376–407 show a composition bias toward polar residues; that stretch reads TPSSLDLTSNGSSRSNSKTMTESSSFYSNMLA.

This sequence belongs to the G-protein coupled receptor 1 family. In terms of assembly, interacts with ARRB1.

Its subcellular location is the cell membrane. In terms of biological role, this is a receptor for the tachykinin neuropeptide substance P. It is probably associated with G proteins that activate a phosphatidylinositol-calcium second messenger system. The sequence is that of Substance-P receptor (TACR1) from Meriones unguiculatus (Mongolian jird).